A 305-amino-acid polypeptide reads, in one-letter code: uncharacterized protein (305 aa).

The disordered stretch occupies residues 208-236 (SYAQSPAVKKKKWRHSGGKKNNPRENHID). The span at 215 to 225 (VKKKKWRHSGG) shows a compositional bias: basic residues.

This is an uncharacterized protein from Bacillus subtilis (strain 168).